The sequence spans 238 residues: Ribonuclease PH (238 aa).

Residues arginine 86 and 124 to 126 each bind phosphate; that span reads GTR.

Belongs to the RNase PH family. In terms of assembly, homohexameric ring arranged as a trimer of dimers.

The enzyme catalyses tRNA(n+1) + phosphate = tRNA(n) + a ribonucleoside 5'-diphosphate. In terms of biological role, phosphorolytic 3'-5' exoribonuclease that plays an important role in tRNA 3'-end maturation. Removes nucleotide residues following the 3'-CCA terminus of tRNAs; can also add nucleotides to the ends of RNA molecules by using nucleoside diphosphates as substrates, but this may not be physiologically important. Probably plays a role in initiation of 16S rRNA degradation (leading to ribosome degradation) during starvation. The chain is Ribonuclease PH from Histophilus somni (strain 129Pt) (Haemophilus somnus).